The primary structure comprises 2415 residues: Spectrin alpha chain, erythrocytic 1 (2415 aa).

Spectrin repeat units follow at residues 52–152 (YHYQ…SDVL), 157–259 (KFYQ…ESLS), 263–365 (DLQR…AKLK), 370–471 (YHRF…HQYR), 475–576 (DFHL…RKLL), 580–681 (QLLQ…GTQL), 686–787 (QLLQ…KKKL), 792–894 (KLQQ…NDLK), and 898–967 (QLQQ…QQQQ). Serine 257 carries the post-translational modification Phosphoserine. Residues 975–1034 (GREARVIALYDFEARSRREVSMKKNDVLTLLSSINKDWWKVEADDHQGFVPAVYVRKLAP) enclose the SH3 domain. Residue serine 990 is modified to Phosphoserine. Spectrin repeat units lie at residues 1085-1177 (LAYE…YQLL), 1183-1285 (VEMF…SLNE), 1287-1390 (HKFF…KMLD), 1394-1489 (ELQL…QLLT), 1499-1603 (DLKQ…KLNE), 1606-1709 (RQQR…KLKE), 1712-1815 (ALFQ…NLEE), 1818-1921 (EYLQ…SQLD), 1924-2029 (HAFQ…KLLE), 2040-2142 (LFME…QELQ), and 2154-2254 (MCQE…NLEQ). At serine 1972 the chain carries Phosphoserine. EF-hand domains follow at residues 2267–2302 (ETLKEFSTTYKHFDENLTGRLTHKEFRSCLRGLNYY), 2310–2345 (EPEPKFEKFLNAVDPGRKGYVSLEDYTSFLIDKESE), and 2347–2382 (IKTSDDIESAFQALAEGKAYITKEDMKQALTPEQVS). Residues aspartate 2280, asparagine 2282, threonine 2284, arginine 2286, glutamate 2291, aspartate 2323, tyrosine 2329, and aspartate 2334 each coordinate Ca(2+).

The protein belongs to the spectrin family. Composed of non-homologous chains, alpha and beta, which aggregate to form dimers, tetramers, and higher polymers. Interacts with FASLG. Interacts with BCAM.

It localises to the cytoplasm. Its subcellular location is the cytoskeleton. It is found in the cell cortex. Functionally, spectrin is the major constituent of the cytoskeletal network underlying the erythrocyte plasma membrane. It associates with band 4.1 and actin to form the cytoskeletal superstructure of the erythrocyte plasma membrane. This is Spectrin alpha chain, erythrocytic 1 (Spta1) from Mus musculus (Mouse).